The chain runs to 469 residues: Probable ribonuclease FAU-1 (469 aa).

The protein belongs to the FAU-1 family.

In terms of biological role, probable RNase involved in rRNA stability through maturation and/or degradation of precursor rRNAs. Binds to RNA in loop regions with AU-rich sequences. The polypeptide is Probable ribonuclease FAU-1 (Pyrococcus horikoshii (strain ATCC 700860 / DSM 12428 / JCM 9974 / NBRC 100139 / OT-3)).